The primary structure comprises 401 residues: MDWLKRWFTRKDQDKTETTSASKRAKITSSLLMFSALYEAKKPLKYTIVYILALVNAFFLLVFIQQTGLYSFGISSLTQGFARLLFVLLKNLEDGQRNLVFNIFYWLFYVIVNIPLIIFSYKKIGKRFTILSTHYVVASNVFGFIFSIIPGANQLPSMLSAVHHTEFWEDAKKAEGVDQSALFVPFLWNDTSQGNVIISTFIYAGIYGFVNGTSLAILYILGSCAGGADFLTQYFARKKNRSVGPILFYVNTFILIIAILMGSFVAGSIVLQDIPDYKKSAWQVNLFFSPNLIATFFSVLFTGTVVSHLFPRYNFAEIKVFTDKIEEVRLALLNDKATHSLSIQETMGGYSLAKKRMIVSVTMYVEIPNLIRIIRKIDKDCLVSITRIRGIDGYIYLRSQD.

7 helical membrane-spanning segments follow: residues 44 to 64 (LKYTIVYILALVNAFFLLVFI), 69 to 89 (LYSFGISSLTQGFARLLFVLL), 99 to 119 (LVFNIFYWLFYVIVNIPLIIF), 130 to 150 (ILSTHYVVASNVFGFIFSIIP), 201 to 221 (FIYAGIYGFVNGTSLAILYIL), 246 to 266 (ILFYVNTFILIIAILMGSFVA), and 286 to 306 (LFFSPNLIATFFSVLFTGTVV).

It localises to the cell membrane. This is an uncharacterized protein from Mycoplasma pneumoniae (strain ATCC 29342 / M129 / Subtype 1) (Mycoplasmoides pneumoniae).